A 328-amino-acid chain; its full sequence is D-cysteine desulfhydrase (328 aa).

Residue K51 is modified to N6-(pyridoxal phosphate)lysine.

The protein belongs to the ACC deaminase/D-cysteine desulfhydrase family. In terms of assembly, homodimer. Pyridoxal 5'-phosphate is required as a cofactor.

It catalyses the reaction D-cysteine + H2O = hydrogen sulfide + pyruvate + NH4(+) + H(+). Its function is as follows. Catalyzes the alpha,beta-elimination reaction of D-cysteine and of several D-cysteine derivatives. It could be a defense mechanism against D-cysteine. The protein is D-cysteine desulfhydrase of Salmonella agona (strain SL483).